A 269-amino-acid polypeptide reads, in one-letter code: 3-methyl-2-oxobutanoate hydroxymethyltransferase (269 aa).

Residues aspartate 50 and aspartate 89 each contribute to the Mg(2+) site. Residues 50–51, aspartate 89, and lysine 118 contribute to the 3-methyl-2-oxobutanoate site; that span reads DS. Glutamate 120 lines the Mg(2+) pocket. The active-site Proton acceptor is glutamate 187.

This sequence belongs to the PanB family. As to quaternary structure, homodecamer; pentamer of dimers. It depends on Mg(2+) as a cofactor.

Its subcellular location is the cytoplasm. It carries out the reaction 3-methyl-2-oxobutanoate + (6R)-5,10-methylene-5,6,7,8-tetrahydrofolate + H2O = 2-dehydropantoate + (6S)-5,6,7,8-tetrahydrofolate. It functions in the pathway cofactor biosynthesis; (R)-pantothenate biosynthesis; (R)-pantoate from 3-methyl-2-oxobutanoate: step 1/2. Functionally, catalyzes the reversible reaction in which hydroxymethyl group from 5,10-methylenetetrahydrofolate is transferred onto alpha-ketoisovalerate to form ketopantoate. This Aliarcobacter butzleri (strain RM4018) (Arcobacter butzleri) protein is 3-methyl-2-oxobutanoate hydroxymethyltransferase.